The primary structure comprises 553 residues: Chaperonin GroEL (553 aa).

ATP-binding positions include T30–P33, K51, D87–T91, G415, and D495.

This sequence belongs to the chaperonin (HSP60) family. In terms of assembly, forms a cylinder of 14 subunits composed of two heptameric rings stacked back-to-back. Interacts with the co-chaperonin GroES.

The protein resides in the cytoplasm. It carries out the reaction ATP + H2O + a folded polypeptide = ADP + phosphate + an unfolded polypeptide.. Functionally, together with its co-chaperonin GroES, plays an essential role in assisting protein folding. The GroEL-GroES system forms a nano-cage that allows encapsulation of the non-native substrate proteins and provides a physical environment optimized to promote and accelerate protein folding. The protein is Chaperonin GroEL of Buchnera aphidicola subsp. Tuberolachnus salignus.